The primary structure comprises 179 residues: Replication restart protein DnaT (179 aa).

Residues 156 to 179 are disordered; that stretch reads GGLPKRDVNTVSEPDSQIPPGFRG.

Belongs to the DnaT family. In terms of assembly, homooligomerizes. Interacts with PriB. Component of the replication restart primosome. Primosome assembly occurs via a 'hand-off' mechanism. PriA binds to replication forks, subsequently PriB then DnaT bind; DnaT then displaces ssDNA to generate the helicase loading substrate.

Functionally, involved in the restart of stalled replication forks, which reloads the replicative helicase on sites other than the origin of replication. Can function in multiple replication restart pathways. Displaces ssDNA from a PriB-ssDNA complex. Probably forms a spiral filament on ssDNA. The chain is Replication restart protein DnaT from Shigella dysenteriae serotype 1 (strain Sd197).